Consider the following 418-residue polypeptide: Putative ion-transport protein YfeO (418 aa).

Helical transmembrane passes span 10 to 30 (LLLS…LIVV), 54 to 74 (DSPL…GLVI), 99 to 119 (ALPG…SLGP), 120 to 140 (EHPI…RLLP), 149 to 169 (ILAS…AALI), 186 to 206 (LFAP…FFHP), 223 to 243 (ILSG…AVWC), 258 to 278 (VLVL…GGPV), 300 to 320 (DYFL…ASGF), 322 to 342 (GGRI…LHEH), 343 to 363 (VPAV…VLVV), and 371 to 391 (LFMA…CIVM).

The protein belongs to the chloride channel (TC 2.A.49) family.

The protein resides in the cell membrane. This Shigella boydii serotype 4 (strain Sb227) protein is Putative ion-transport protein YfeO.